Here is a 435-residue protein sequence, read N- to C-terminus: MKKASIITYGCQMNVNESAKIKKIFQNLGYDVTEEIDNADAVFLNTCTVREGAATQIFGKLGELKALKEKRGTIIGVTGCFAQEQGEELVKKFPIIDIVMGNQNIGRIPQAIEKIENNESTHEVYTDNEDELPPRLDAEFGSDQTASISITYGCNNFCTFCIVPYVRGRERSVPLEEIVKDVEQYVKKGAKEIVLLGQNVNSYGKDFKNGDNFAKLLDEICKVEGDYIVRFVSPHPRDFTDDVIEVIAKNKKISKCLHLPLQSGSSQILKKMRRGYTKEKYLALVDKIKSKIPGVALTADIIVGFPGETEEDFLDTIDVVQKVSFDNSYMFMYSIRKGTKAATMDNQIEESVKKERLQRLMEVQNKCSFYESSKYKGRIVKVLVEGPSKKNKEVLSGRTSTNKIVLFRGNLALKGQFINVKINECKTWTLYGEIV.

One can recognise an MTTase N-terminal domain in the interval 2 to 117 (KKASIITYGC…IPQAIEKIEN (116 aa)). [4Fe-4S] cluster is bound by residues Cys11, Cys47, Cys80, Cys154, Cys158, and Cys161. Positions 140–370 (FGSDQTASIS…MEVQNKCSFY (231 aa)) constitute a Radical SAM core domain. The TRAM domain maps to 373–435 (SKYKGRIVKV…KTWTLYGEIV (63 aa)).

It belongs to the methylthiotransferase family. MiaB subfamily. As to quaternary structure, monomer. [4Fe-4S] cluster serves as cofactor.

The protein localises to the cytoplasm. The enzyme catalyses N(6)-dimethylallyladenosine(37) in tRNA + (sulfur carrier)-SH + AH2 + 2 S-adenosyl-L-methionine = 2-methylsulfanyl-N(6)-dimethylallyladenosine(37) in tRNA + (sulfur carrier)-H + 5'-deoxyadenosine + L-methionine + A + S-adenosyl-L-homocysteine + 2 H(+). Functionally, catalyzes the methylthiolation of N6-(dimethylallyl)adenosine (i(6)A), leading to the formation of 2-methylthio-N6-(dimethylallyl)adenosine (ms(2)i(6)A) at position 37 in tRNAs that read codons beginning with uridine. This Fusobacterium nucleatum subsp. nucleatum (strain ATCC 25586 / DSM 15643 / BCRC 10681 / CIP 101130 / JCM 8532 / KCTC 2640 / LMG 13131 / VPI 4355) protein is tRNA-2-methylthio-N(6)-dimethylallyladenosine synthase.